A 188-amino-acid polypeptide reads, in one-letter code: Acireductone dioxygenase (188 aa).

Residues H97, H99, E103, and H141 each coordinate Fe(2+). The Ni(2+) site is built by H97, H99, E103, and H141.

This sequence belongs to the acireductone dioxygenase (ARD) family. As to quaternary structure, monomer. The cofactor is Fe(2+). Requires Ni(2+) as cofactor.

It carries out the reaction 1,2-dihydroxy-5-(methylsulfanyl)pent-1-en-3-one + O2 = 3-(methylsulfanyl)propanoate + CO + formate + 2 H(+). The catalysed reaction is 1,2-dihydroxy-5-(methylsulfanyl)pent-1-en-3-one + O2 = 4-methylsulfanyl-2-oxobutanoate + formate + 2 H(+). The protein operates within amino-acid biosynthesis; L-methionine biosynthesis via salvage pathway; L-methionine from S-methyl-5-thio-alpha-D-ribose 1-phosphate: step 5/6. Functionally, catalyzes 2 different reactions between oxygen and the acireductone 1,2-dihydroxy-3-keto-5-methylthiopentene (DHK-MTPene) depending upon the metal bound in the active site. Fe-containing acireductone dioxygenase (Fe-ARD) produces formate and 2-keto-4-methylthiobutyrate (KMTB), the alpha-ketoacid precursor of methionine in the methionine recycle pathway. Ni-containing acireductone dioxygenase (Ni-ARD) produces methylthiopropionate, carbon monoxide and formate, and does not lie on the methionine recycle pathway. This Xylella fastidiosa (strain M12) protein is Acireductone dioxygenase.